The following is a 173-amino-acid chain: Co-chaperone protein HscB homolog (173 aa).

Positions 5 to 77 (SHFALFDLEP…SQRARYLLSL (73 aa)) constitute a J domain.

This sequence belongs to the HscB family. As to quaternary structure, interacts with HscA and stimulates its ATPase activity.

Its function is as follows. Co-chaperone involved in the maturation of iron-sulfur cluster-containing proteins. Seems to help targeting proteins to be folded toward HscA. The polypeptide is Co-chaperone protein HscB homolog (Azotobacter vinelandii (strain DJ / ATCC BAA-1303)).